Reading from the N-terminus, the 198-residue chain is Recombination protein RecR (198 aa).

A C4-type zinc finger spans residues 57-72 (CSECGHITEQDPCYIC). The Toprim domain maps to 80–175 (SVICVVEDDK…TVTRLAQGLS (96 aa)).

It belongs to the RecR family.

May play a role in DNA repair. It seems to be involved in an RecBC-independent recombinational process of DNA repair. It may act with RecF and RecO. The chain is Recombination protein RecR from Staphylococcus saprophyticus subsp. saprophyticus (strain ATCC 15305 / DSM 20229 / NCIMB 8711 / NCTC 7292 / S-41).